The chain runs to 188 residues: Elongation factor P (188 aa).

The protein belongs to the elongation factor P family.

It is found in the cytoplasm. It functions in the pathway protein biosynthesis; polypeptide chain elongation. Its function is as follows. Involved in peptide bond synthesis. Stimulates efficient translation and peptide-bond synthesis on native or reconstituted 70S ribosomes in vitro. Probably functions indirectly by altering the affinity of the ribosome for aminoacyl-tRNA, thus increasing their reactivity as acceptors for peptidyl transferase. The polypeptide is Elongation factor P (Caulobacter sp. (strain K31)).